The sequence spans 1102 residues: DNA-directed RNA polymerase subunit beta (1102 aa).

Residues 1081 to 1102 form a disordered region; that stretch reads LPGKRTPSRPIYESLSTEGNQD.

It belongs to the RNA polymerase beta chain family. As to quaternary structure, in cyanobacteria the RNAP catalytic core is composed of 2 alpha, 1 beta, 1 beta', 1 gamma and 1 omega subunit. When a sigma factor is associated with the core the holoenzyme is formed, which can initiate transcription.

It carries out the reaction RNA(n) + a ribonucleoside 5'-triphosphate = RNA(n+1) + diphosphate. In terms of biological role, DNA-dependent RNA polymerase catalyzes the transcription of DNA into RNA using the four ribonucleoside triphosphates as substrates. This is DNA-directed RNA polymerase subunit beta from Trichodesmium erythraeum (strain IMS101).